The following is a 122-amino-acid chain: MKPFVAIIFCFLILGVDSQRWFQFMKEAGQGTRDMWRAYTDMREANWKNSDKYFHARGNYDAAQRGPGGAWAAKVISDAREGFKRITGRGIEDSRADQFANEWGRSGKDPNFFRPPGLPSKY.

Positions 1–18 (MKPFVAIIFCFLILGVDS) are cleaved as a signal peptide. Residues 19-45 (QRWFQFMKEAGQGTRDMWRAYTDMREA) form an important for amyloid formation region. The tract at residues 100–122 (ANEWGRSGKDPNFFRPPGLPSKY) is disordered.

It belongs to the SAA family. As to quaternary structure, homohexamer; dimer of trimers. Can form amyloid fibrils after partial proteolysis; the native, undenatured protein does not form amyloid fibrils (in vitro). Apolipoprotein of the HDL complex. Binds to heparin. In terms of tissue distribution, detected in liver, spleen and kidney.

Its subcellular location is the secreted. Its function is as follows. Major acute phase protein. The chain is Serum amyloid A-1 protein (SAA1) from Mesocricetus auratus (Golden hamster).